A 555-amino-acid polypeptide reads, in one-letter code: Dihydroxy-acid dehydratase (555 aa).

Residue Asp78 participates in Mg(2+) binding. Cys119 contacts [2Fe-2S] cluster. Residues Asp120 and Lys121 each contribute to the Mg(2+) site. Lys121 is modified (N6-carboxylysine). Residue Cys195 coordinates [2Fe-2S] cluster. Glu444 contributes to the Mg(2+) binding site. Ser470 serves as the catalytic Proton acceptor.

This sequence belongs to the IlvD/Edd family. Homodimer. [2Fe-2S] cluster serves as cofactor. Mg(2+) is required as a cofactor.

The enzyme catalyses (2R)-2,3-dihydroxy-3-methylbutanoate = 3-methyl-2-oxobutanoate + H2O. It carries out the reaction (2R,3R)-2,3-dihydroxy-3-methylpentanoate = (S)-3-methyl-2-oxopentanoate + H2O. Its pathway is amino-acid biosynthesis; L-isoleucine biosynthesis; L-isoleucine from 2-oxobutanoate: step 3/4. The protein operates within amino-acid biosynthesis; L-valine biosynthesis; L-valine from pyruvate: step 3/4. Its function is as follows. Functions in the biosynthesis of branched-chain amino acids. Catalyzes the dehydration of (2R,3R)-2,3-dihydroxy-3-methylpentanoate (2,3-dihydroxy-3-methylvalerate) into 2-oxo-3-methylpentanoate (2-oxo-3-methylvalerate) and of (2R)-2,3-dihydroxy-3-methylbutanoate (2,3-dihydroxyisovalerate) into 2-oxo-3-methylbutanoate (2-oxoisovalerate), the penultimate precursor to L-isoleucine and L-valine, respectively. The sequence is that of Dihydroxy-acid dehydratase from Dehalococcoides mccartyi (strain ATCC BAA-2266 / KCTC 15142 / 195) (Dehalococcoides ethenogenes (strain 195)).